A 359-amino-acid chain; its full sequence is UPF0283 membrane protein Atu1356 (359 aa).

The disordered stretch occupies residues 1 to 39 (MKAPTQNDPQTRRPAAFTLETEEAARPSATQKRAPRSFD). 2 helical membrane-spanning segments follow: residues 75–95 (FGKLGLGALGVLFSLAFGLWA) and 108–128 (WLGYTATIALIVALFAVLALV).

The protein belongs to the UPF0283 family.

It localises to the cell inner membrane. This Agrobacterium fabrum (strain C58 / ATCC 33970) (Agrobacterium tumefaciens (strain C58)) protein is UPF0283 membrane protein Atu1356.